We begin with the raw amino-acid sequence, 526 residues long: Dye-decolorizing peroxidase (526 aa).

The signal sequence occupies residues 1–21 (MRKSISTFILLSVLSVGQLVA). Positions 22–63 (ARPRSTNAPPRRRTPQPRRTTSLFINPPALPDLPTVQAVDKL) are excised as a propeptide. Asn186 carries an N-linked (GlcNAc...) asparagine glycan. The Proton acceptor role is filled by Asp231. N-linked (GlcNAc...) asparagine glycosylation is present at Asn367. His376 contacts heme. N-linked (GlcNAc...) asparagine glycosylation is found at Asn473 and Asn484.

The protein belongs to the DyP-type peroxidase family. Heme b serves as cofactor.

Its subcellular location is the secreted. It catalyses the reaction Reactive Blue 5 + 2 H2O2 = 2,2'-disulfonyl azobenzene + 3-[(4-amino-6-chloro-1,3,5-triazin-2-yl)amino]benzenesulfonate + phthalate + 2 H2O + 2 H(+). It carries out the reaction 2 a phenolic donor + H2O2 = 2 a phenolic radical donor + 2 H2O. Manganese-independent peroxidase that is able to convert a large number of compounds, but its physiological substrate is not known. In addition to classic peroxidase substrates (e.g. 2,6-dimethoxyphenol), oxidizes dyes such as Reactive Blue 5 and Reactive Black 5. This is Dye-decolorizing peroxidase from Mycena epipterygia (Yellow-stemmed mycena).